The chain runs to 355 residues: Elongation factor Ts, mitochondrial (355 aa).

Residues 1-46 (MIRSLNFALRNCNKNILINSNKITINNGLLLKKNNFCTQSTSEVKV) constitute a mitochondrion transit peptide.

The protein belongs to the EF-Ts family.

It localises to the mitochondrion. Its function is as follows. Associates with the EF-Tu.GDP complex and induces the exchange of GDP to GTP. It remains bound to the aminoacyl-tRNA.EF-Tu.GTP complex up to the GTP hydrolysis stage on the ribosome. The polypeptide is Elongation factor Ts, mitochondrial (tsfm) (Dictyostelium discoideum (Social amoeba)).